The chain runs to 475 residues: MKVLFAASESHPFVKTGGLADVIGTLPRYLKKIGVDVRVVIPKYSAIKSHLASEFNFIKYFYVPVGWRNKYCGIFQCEYMGVIYYLIDNEYYFFRDELYGYYDDGERFAFFDRAVLDMLWQINYKPDIIHCNDWHTGMIPVLYKIQYKQSSFYRGVKFVFSIHNLLFQGNFDKNILGELFNLDGSLYENGSVELNGAVSFMKSGINYSDKISTVSRSYAFEIQSPEYGENLDGLLRSRSSDLWGIVNGIDYDIYNPEKDNMIFRNYNKNNLRNKMINKLKIQNDLNLDINENVPVLAIISRFTPQKGMDIIKTIGERLVSKHVQLIVLGTGYNEYEEYFRYLSSKYPRNVSTNIYFDDVLAHKIYAASDMFLMPSLFEPCGLGQLIALRYGTIPIVRETGGLKDTIIPYNKYTGEGNGFSFANFDGDDLLRIINDAVDYFEEKDIWNNIVTHAMESNNSWDNSAKPYKSLYESLL.

ADP-alpha-D-glucose is bound at residue Lys15.

Belongs to the glycosyltransferase 1 family. Bacterial/plant glycogen synthase subfamily.

It carries out the reaction [(1-&gt;4)-alpha-D-glucosyl](n) + ADP-alpha-D-glucose = [(1-&gt;4)-alpha-D-glucosyl](n+1) + ADP + H(+). It functions in the pathway glycan biosynthesis; glycogen biosynthesis. In terms of biological role, synthesizes alpha-1,4-glucan chains using ADP-glucose. The polypeptide is Glycogen synthase (Clostridium kluyveri (strain ATCC 8527 / DSM 555 / NBRC 12016 / NCIMB 10680 / K1)).